The chain runs to 779 residues: Cell division control protein 4 (779 aa).

The tract at residues 39–80 is disordered; the sequence is AGTHRNSSTAKTVETEDGEEDIDEYQRKRAAGSGESTPERSD. Positions 82–85 match the Nuclear localization signal motif; the sequence is KRVK. S104 carries the post-translational modification Phosphoserine. One can recognise an F-box domain in the interval 272–319; the sequence is RDLITSLPFEISLKIFNYLQFEDIINSLGVSQNWNKIIRKSTSLWKKL. WD repeat units follow at residues 380–408, 420–449, 461–493, 528–556, 568–598, 630–658, and 669–698; these read HMTS…RVYD, GHDG…RVWD, GHNS…HVWK, GHMA…IVWD, GHTD…RIWD, GHTA…RGWD, and HHTN…NIYN.

Interacts with DCD53 and SKP1. Component of the SCF(CDC4) complex containing CDC53, SKP1, RBX1 and CDC4. CDC34. Interacts with CDC6 and CIC1. Interacts with SIC1; the interaction involves a SIC1 double phosphorylated motif (degron). Homodimerizes; the dimerization increases SIC1 ubiquitination in vitro.

Its subcellular location is the nucleus. It participates in protein modification; protein ubiquitination. Substrate recognition component of a SCF (SKP1-CUL1-F-box protein) E3 ubiquitin-protein ligase complex which mediates the ubiquitination and subsequent proteasomal degradation of target proteins. Recognizes and binds to phosphorylated target proteins. Directs ubiquitination of the phosphorylated CDK inhibitor SIC1. Involved in the degradation of CDC6 together with CDC34/UBC3 and CDC53, and in restricting the degradation of FAR1 to the nucleus. Is essential for initiation of DNA replication and separation of the spindle pole bodies to form the poles of the mitotic spindle. It also plays a role in bud development, fusion of zygotic nuclei after conjugation and various aspects of sporulation. Required for HTA1-HTB1 locus transcription activation. Required for G1/S and G2/M transition. This chain is Cell division control protein 4 (CDC4), found in Saccharomyces cerevisiae (strain ATCC 204508 / S288c) (Baker's yeast).